The following is a 300-amino-acid chain: Protoheme IX farnesyltransferase 1 (300 aa).

Helical transmembrane passes span 28-48 (VVAL…PGAV), 50-70 (VQPL…AAAY), 106-126 (AMAI…TAWL), 150-170 (IVVG…AITG), 176-196 (ALLL…ALAI), 222-242 (CIML…LVGM), 243-263 (CGPL…YKAW), and 280-300 (FSIY…YLWS).

This sequence belongs to the UbiA prenyltransferase family. Protoheme IX farnesyltransferase subfamily.

The protein localises to the cell inner membrane. The catalysed reaction is heme b + (2E,6E)-farnesyl diphosphate + H2O = Fe(II)-heme o + diphosphate. It functions in the pathway porphyrin-containing compound metabolism; heme O biosynthesis; heme O from protoheme: step 1/1. Functionally, converts heme B (protoheme IX) to heme O by substitution of the vinyl group on carbon 2 of heme B porphyrin ring with a hydroxyethyl farnesyl side group. This is Protoheme IX farnesyltransferase 1 from Shewanella loihica (strain ATCC BAA-1088 / PV-4).